Consider the following 147-residue polypeptide: Putative toxin MJ0142 (147 aa).

The protein belongs to the UPF0332 family.

In terms of biological role, putative toxin component of a putative type VII toxin-antitoxin (TA) system. Its cognate antitoxin might be MJ0141. This chain is Putative toxin MJ0142, found in Methanocaldococcus jannaschii (strain ATCC 43067 / DSM 2661 / JAL-1 / JCM 10045 / NBRC 100440) (Methanococcus jannaschii).